A 536-amino-acid chain; its full sequence is Peptide chain release factor 3 (536 aa).

One can recognise a tr-type G domain in the interval 13 to 281 (SHRRTFAIIS…ALIDWAPAPQ (269 aa)). Residues 22-29 (SHPDAGKT), 90-94 (DTPGH), and 144-147 (NKCD) contribute to the GTP site.

The protein belongs to the TRAFAC class translation factor GTPase superfamily. Classic translation factor GTPase family. PrfC subfamily.

The protein resides in the cytoplasm. Its function is as follows. Increases the formation of ribosomal termination complexes and stimulates activities of RF-1 and RF-2. It binds guanine nucleotides and has strong preference for UGA stop codons. It may interact directly with the ribosome. The stimulation of RF-1 and RF-2 is significantly reduced by GTP and GDP, but not by GMP. The sequence is that of Peptide chain release factor 3 from Chromobacterium violaceum (strain ATCC 12472 / DSM 30191 / JCM 1249 / CCUG 213 / NBRC 12614 / NCIMB 9131 / NCTC 9757 / MK).